The primary structure comprises 178 residues: Acireductone dioxygenase (178 aa).

Positions 100, 102, 106, and 145 each coordinate Fe(2+). Histidine 100, histidine 102, glutamate 106, and histidine 145 together coordinate Ni(2+).

The protein belongs to the acireductone dioxygenase (ARD) family. In terms of assembly, monomer. Fe(2+) is required as a cofactor. Requires Ni(2+) as cofactor.

It carries out the reaction 1,2-dihydroxy-5-(methylsulfanyl)pent-1-en-3-one + O2 = 3-(methylsulfanyl)propanoate + CO + formate + 2 H(+). The catalysed reaction is 1,2-dihydroxy-5-(methylsulfanyl)pent-1-en-3-one + O2 = 4-methylsulfanyl-2-oxobutanoate + formate + 2 H(+). It participates in amino-acid biosynthesis; L-methionine biosynthesis via salvage pathway; L-methionine from S-methyl-5-thio-alpha-D-ribose 1-phosphate: step 5/6. In terms of biological role, catalyzes 2 different reactions between oxygen and the acireductone 1,2-dihydroxy-3-keto-5-methylthiopentene (DHK-MTPene) depending upon the metal bound in the active site. Fe-containing acireductone dioxygenase (Fe-ARD) produces formate and 2-keto-4-methylthiobutyrate (KMTB), the alpha-ketoacid precursor of methionine in the methionine recycle pathway. Ni-containing acireductone dioxygenase (Ni-ARD) produces methylthiopropionate, carbon monoxide and formate, and does not lie on the methionine recycle pathway. The polypeptide is Acireductone dioxygenase (mtnD) (Bacillus subtilis (strain 168)).